The sequence spans 1137 residues: Isoleucine--tRNA ligase (1137 aa).

Positions Pro-50–His-60 match the 'HIGH' region motif. Residues Lys-688–Arg-692 carry the 'KMSKS' region motif. Lys-691 provides a ligand contact to ATP.

The protein belongs to the class-I aminoacyl-tRNA synthetase family. IleS type 2 subfamily. In terms of assembly, monomer. It depends on Zn(2+) as a cofactor.

It localises to the cytoplasm. The enzyme catalyses tRNA(Ile) + L-isoleucine + ATP = L-isoleucyl-tRNA(Ile) + AMP + diphosphate. In terms of biological role, catalyzes the attachment of isoleucine to tRNA(Ile). As IleRS can inadvertently accommodate and process structurally similar amino acids such as valine, to avoid such errors it has two additional distinct tRNA(Ile)-dependent editing activities. One activity is designated as 'pretransfer' editing and involves the hydrolysis of activated Val-AMP. The other activity is designated 'posttransfer' editing and involves deacylation of mischarged Val-tRNA(Ile). The protein is Isoleucine--tRNA ligase of Porphyromonas gingivalis (strain ATCC BAA-308 / W83).